A 673-amino-acid chain; its full sequence is DNA ligase (673 aa).

NAD(+)-binding positions include 33–37, 83–84, and E117; these read DHQYD and SL. K119 serves as the catalytic N6-AMP-lysine intermediate. Residues R140, E175, K282, and K306 each contribute to the NAD(+) site. C400, C403, C418, and C424 together coordinate Zn(2+). One can recognise a BRCT domain in the interval 592–673; it reads RGSSAISGKT…WVKMVEDARS (82 aa).

Belongs to the NAD-dependent DNA ligase family. LigA subfamily. Mg(2+) serves as cofactor. The cofactor is Mn(2+).

The enzyme catalyses NAD(+) + (deoxyribonucleotide)n-3'-hydroxyl + 5'-phospho-(deoxyribonucleotide)m = (deoxyribonucleotide)n+m + AMP + beta-nicotinamide D-nucleotide.. Functionally, DNA ligase that catalyzes the formation of phosphodiester linkages between 5'-phosphoryl and 3'-hydroxyl groups in double-stranded DNA using NAD as a coenzyme and as the energy source for the reaction. It is essential for DNA replication and repair of damaged DNA. This is DNA ligase from Anaplasma marginale (strain Florida).